Consider the following 3753-residue polypeptide: Intermembrane lipid transfer protein VPS13C (3753 aa).

The Chorein N-terminal domain occupies 3-116 (LESVVADLLN…LQDVKQKELS (114 aa)). Position 132 is a phosphoserine (Ser132). Residues 150–164 (GRKRKKHKKHFKKPF) are compositionally biased toward basic residues. The tract at residues 150 to 176 (GRKRKKHKKHFKKPFKGLDRSKDKPKE) is disordered. Over residues 165–176 (KGLDRSKDKPKE) the composition is skewed to basic and acidic residues. Thr614 is modified (phosphothreonine). Ser619 is subject to Phosphoserine. Thr624 carries the post-translational modification Phosphothreonine. 4 positions are modified to phosphoserine: Ser737, Ser842, Ser872, and Ser874. The FFAT signature appears at 877 to 883 (EYFDAED). Phosphoserine is present on residues Ser1979 and Ser2473. The tract at residues 2415-3309 (DYSLKDRAPF…IQQDIDALNA (895 aa)) is required for late endosome/lysosome localization. An SHR-BD domain is found at 2766-3016 (LSVFSPYWLI…RLFAWADPTG (251 aa)). Positions 3310–3753 (ELMETSMTDM…VRLLRPQLPS (444 aa)) are required for lipid droplet localization. Arg3519 and Arg3526 each carry omega-N-methylarginine. The residue at position 3538 (Lys3538) is an N6-acetyllysine. The residue at position 3641 (Ser3641) is a Phosphoserine.

Belongs to the VPS13 family. Widely expressed.

It is found in the mitochondrion outer membrane. The protein resides in the lipid droplet. It localises to the endoplasmic reticulum membrane. Its subcellular location is the lysosome membrane. The protein localises to the late endosome membrane. Its function is as follows. Mediates the transfer of lipids between membranes at organelle contact sites. Necessary for proper mitochondrial function and maintenance of mitochondrial transmembrane potential. Involved in the regulation of PINK1/PRKN-mediated mitophagy in response to mitochondrial depolarization. This is Intermembrane lipid transfer protein VPS13C from Homo sapiens (Human).